A 386-amino-acid chain; its full sequence is Acetylornithine aminotransferase (386 aa).

Pyridoxal 5'-phosphate is bound by residues 96-97 (GA) and F123. R126 is a N(2)-acetyl-L-ornithine binding site. 208 to 211 (DEVQ) contacts pyridoxal 5'-phosphate. K237 is modified (N6-(pyridoxal phosphate)lysine). Residue S265 coordinates N(2)-acetyl-L-ornithine. Position 266 (T266) interacts with pyridoxal 5'-phosphate.

Belongs to the class-III pyridoxal-phosphate-dependent aminotransferase family. ArgD subfamily. In terms of assembly, homodimer. It depends on pyridoxal 5'-phosphate as a cofactor.

It is found in the cytoplasm. It catalyses the reaction N(2)-acetyl-L-ornithine + 2-oxoglutarate = N-acetyl-L-glutamate 5-semialdehyde + L-glutamate. It participates in amino-acid biosynthesis; L-arginine biosynthesis; N(2)-acetyl-L-ornithine from L-glutamate: step 4/4. The chain is Acetylornithine aminotransferase from Bacillus anthracis.